Consider the following 638-residue polypeptide: Sodium- and chloride-dependent neutral and basic amino acid transporter B(0+) (638 aa).

The Cytoplasmic segment spans residues 1–44 (MDRLKCPNFFKCRQKEKVTASSENFHVGENDENQERGNWSKKSD). Transmembrane regions (helical) follow at residues 45-65 (YLLS…FPYL), 72-92 (GAFL…LFFL), and 110-130 (ILPL…FVAI). Topologically, residues 131–230 (YYNVIIAYSL…RSSGMDETGV (100 aa)) are extracellular. 6 N-linked (GlcNAc...) asparagine glycosylation sites follow: Asn-155, Asn-163, Asn-174, Asn-185, Asn-193, and Asn-198. The next 2 helical transmembrane spans lie at 231–251 (VVWY…AALF) and 257–277 (SGKV…ILLI). An N-linked (GlcNAc...) asparagine glycan is attached at Asn-298. Transmembrane regions (helical) follow at residues 311-331 (AATQ…ALSS), 344-364 (IIVC…IFSI), 395-415 (LAQL…LLTL), 453-473 (ILFL…VHLI), 476-496 (FCAG…IIWI), 524-544 (CWFV…LVKF), and 559-579 (VALG…MAII). Residues 580 to 638 (KIVQAEGNILQRIISCCRPASNWGPYLEKHRGERYRDMAEPAKETDHEIPTISGSTKPE) are Cytoplasmic-facing. Over residues 618 to 628 (AEPAKETDHEI) the composition is skewed to basic and acidic residues. A disordered region spans residues 618-638 (AEPAKETDHEIPTISGSTKPE).

Belongs to the sodium:neurotransmitter symporter (SNF) (TC 2.A.22) family. SLC6A14 subfamily. As to expression, expressed in the distal region of the intestinal tract: cecum and colon.

The protein resides in the membrane. The protein localises to the apical cell membrane. It catalyses the reaction glycine(out) + chloride(out) + 2 Na(+)(out) = glycine(in) + chloride(in) + 2 Na(+)(in). The enzyme catalyses L-leucine(out) + chloride(out) + 2 Na(+)(out) = L-leucine(in) + chloride(in) + 2 Na(+)(in). It carries out the reaction L-glutamine(out) + chloride(out) + 2 Na(+)(out) = L-glutamine(in) + chloride(in) + 2 Na(+)(in). The catalysed reaction is L-arginine(out) + chloride(out) + 2 Na(+)(out) = L-arginine(in) + chloride(in) + 2 Na(+)(in). It catalyses the reaction (R)-carnitine(out) + chloride(out) + 2 Na(+)(out) = (R)-carnitine(in) + chloride(in) + 2 Na(+)(in). The enzyme catalyses O-propanoyl-(R)-carnitine(out) + chloride(out) + 2 Na(+)(out) = O-propanoyl-(R)-carnitine(in) + chloride(in) + 2 Na(+)(in). It carries out the reaction L-isoleucine(out) + chloride(out) + 2 Na(+)(out) = L-isoleucine(in) + chloride(in) + 2 Na(+)(in). The catalysed reaction is L-methionine(out) + chloride(out) + 2 Na(+)(out) = L-methionine(in) + chloride(in) + 2 Na(+)(in). It catalyses the reaction L-valine(out) + chloride(out) + 2 Na(+)(out) = L-valine(in) + chloride(in) + 2 Na(+)(in). The enzyme catalyses L-alanine(out) + chloride(out) + 2 Na(+)(out) = L-alanine(in) + chloride(in) + 2 Na(+)(in). It carries out the reaction L-serine(out) + chloride(out) + 2 Na(+)(out) = L-serine(in) + chloride(in) + 2 Na(+)(in). The catalysed reaction is L-cysteine(out) + chloride(out) + 2 Na(+)(out) = L-cysteine(in) + chloride(in) + 2 Na(+)(in). It catalyses the reaction L-asparagine(out) + chloride(out) + 2 Na(+)(out) = L-asparagine(in) + chloride(in) + 2 Na(+)(in). The enzyme catalyses L-threonine(out) + chloride(out) + 2 Na(+)(out) = L-threonine(in) + chloride(in) + 2 Na(+)(in). It carries out the reaction L-phenylalanine(out) + chloride(out) + 2 Na(+)(out) = L-phenylalanine(in) + chloride(in) + 2 Na(+)(in). The catalysed reaction is L-tryptophan(out) + chloride(out) + 2 Na(+)(out) = L-tryptophan(in) + chloride(in) + 2 Na(+)(in). It catalyses the reaction L-tyrosine(out) + chloride(out) + 2 Na(+)(out) = L-tyrosine(in) + chloride(in) + 2 Na(+)(in). The enzyme catalyses L-histidine(out) + chloride(out) + 2 Na(+)(out) = L-histidine(in) + chloride(in) + 2 Na(+)(in). It carries out the reaction L-lysine(out) + chloride(out) + 2 Na(+)(out) = L-lysine(in) + chloride(in) + 2 Na(+)(in). The catalysed reaction is O-butanoyl-(R)-carnitine(out) + chloride(out) + 2 Na(+)(out) = O-butanoyl-(R)-carnitine(in) + chloride(in) + 2 Na(+)(in). Amino acid transporter that plays an important role in the absorption of amino acids in the intestinal tract. Mediates the uptake of a broad range of neutral and cationic amino acids (with the exception of proline) in a Na(+)/Cl(-)-dependent manner. Transports non-alpha-amino acids such as beta-alanine with low affinity, and has a higher affinity for dipolar and cationic amino acids such as leucine and lysine. Can also transport carnitine, butyrylcarnitine and propionylcarnitine coupled to the transmembrane gradients of Na(+) and Cl(-). The sequence is that of Sodium- and chloride-dependent neutral and basic amino acid transporter B(0+) from Mus musculus (Mouse).